The following is a 253-amino-acid chain: Large ribosomal subunit protein bL28m (253 aa).

Residues 1–55 (MPLHKYPPALWDVLKLKDGIYARLPEHYRRSLLEKHKPYPVHWKPHGLKYRLNPK) constitute a mitochondrion transit peptide.

Belongs to the bacterial ribosomal protein bL28 family. As to quaternary structure, component of the mitochondrial ribosome large subunit (39S) which comprises a 16S rRNA and about 50 distinct proteins.

It localises to the mitochondrion. The protein is Large ribosomal subunit protein bL28m (mrpl28) of Xenopus laevis (African clawed frog).